Here is a 227-residue protein sequence, read N- to C-terminus: uncharacterized protein (227 aa).

The next 2 helical transmembrane spans lie at 13-35 (CVRA…FAFS) and 155-177 (IFFR…MVFL). Residues 192–227 (GDARPRPAGPQGTARSRTDEAQVSPGTPPECPVSVF) are disordered. Residues 217 to 227 (GTPPECPVSVF) show a composition bias toward pro residues.

The protein resides in the cell membrane. This is an uncharacterized protein from Treponema pallidum (strain Nichols).